An 80-amino-acid polypeptide reads, in one-letter code: MQTAYWVMVMMMVWITAPLSEGGKLNDVIRGLVPDDVTPQLILRSLISRRPSDSVVRSTVHICYWKVCPPPPWRRPNGKG.

The N-terminal stretch at 1-22 (MQTAYWVMVMMMVWITAPLSEG) is a signal peptide. The propeptide occupies 23–57 (GKLNDVIRGLVPDDVTPQLILRSLISRRPSDSVVR). Cys63 and Cys68 form a disulfide bridge. The residue at position 65 (Trp65) is a D-tryptophan. Pro69, Pro70, Pro71, and Pro72 each carry 4-hydroxyproline. A propeptide spanning residues 74 to 80 (RRPNGKG) is cleaved from the precursor.

It belongs to the conotoxin C superfamily. Consomatin family. In terms of tissue distribution, expressed by the venom duct.

The protein resides in the secreted. Moderately activates human somatostatin receptors (SSTR) with a preferential activation of SSTR1 and SSTR4. In vivo, does not cause behavioral changes in mice within a few minutes of intracranial injection, but causes a progressive loss of movement thereafter. Four to five hours after injection, mice recover, even with the highest dose tested. Shows antinociception and antihyperalgesia activities in two mouse models of acute pain, most probably by acting outside the central nervous system. The polypeptide is Consomatin Mrc1 (Conus mercator (Trader cone)).